Consider the following 366-residue polypeptide: S-adenosylmethionine:tRNA ribosyltransferase-isomerase (366 aa).

It belongs to the QueA family. As to quaternary structure, monomer.

It is found in the cytoplasm. It carries out the reaction 7-aminomethyl-7-carbaguanosine(34) in tRNA + S-adenosyl-L-methionine = epoxyqueuosine(34) in tRNA + adenine + L-methionine + 2 H(+). It functions in the pathway tRNA modification; tRNA-queuosine biosynthesis. In terms of biological role, transfers and isomerizes the ribose moiety from AdoMet to the 7-aminomethyl group of 7-deazaguanine (preQ1-tRNA) to give epoxyqueuosine (oQ-tRNA). In Synechococcus sp. (strain CC9605), this protein is S-adenosylmethionine:tRNA ribosyltransferase-isomerase.